The sequence spans 212 residues: Glycerol-3-phosphate acyltransferase (212 aa).

5 consecutive transmembrane segments (helical) span residues 9–29 (AACL…GYLL), 67–87 (GPAL…VLLA), 95–115 (WLQV…VWLG), 128–148 (MFLG…MAVI), and 168–190 (LMVV…LMVL).

It belongs to the PlsY family. Probably interacts with PlsX.

The protein resides in the cell inner membrane. The catalysed reaction is an acyl phosphate + sn-glycerol 3-phosphate = a 1-acyl-sn-glycero-3-phosphate + phosphate. The protein operates within lipid metabolism; phospholipid metabolism. In terms of biological role, catalyzes the transfer of an acyl group from acyl-phosphate (acyl-PO(4)) to glycerol-3-phosphate (G3P) to form lysophosphatidic acid (LPA). This enzyme utilizes acyl-phosphate as fatty acyl donor, but not acyl-CoA or acyl-ACP. This Parasynechococcus marenigrum (strain WH8102) protein is Glycerol-3-phosphate acyltransferase.